The following is a 41-amino-acid chain: MKIRNSLKSLLGRHRDNRLVRRKGRIYIINKTQKRYKARQG.

This sequence belongs to the bacterial ribosomal protein bL36 family.

The chain is Large ribosomal subunit protein bL36 from Azorhizobium caulinodans (strain ATCC 43989 / DSM 5975 / JCM 20966 / LMG 6465 / NBRC 14845 / NCIMB 13405 / ORS 571).